The following is a 279-amino-acid chain: Pantothenate synthetase (279 aa).

30 to 37 is an ATP binding site; the sequence is MGALHAGH. The active-site Proton donor is H37. Residue Q61 participates in (R)-pantoate binding. Q61 provides a ligand contact to beta-alanine. 147–150 contacts ATP; that stretch reads GEKD. Q153 is a (R)-pantoate binding site. ATP is bound by residues A176 and 184–187; that span reads LSSR.

It belongs to the pantothenate synthetase family. As to quaternary structure, homodimer.

The protein localises to the cytoplasm. The enzyme catalyses (R)-pantoate + beta-alanine + ATP = (R)-pantothenate + AMP + diphosphate + H(+). It functions in the pathway cofactor biosynthesis; (R)-pantothenate biosynthesis; (R)-pantothenate from (R)-pantoate and beta-alanine: step 1/1. Catalyzes the condensation of pantoate with beta-alanine in an ATP-dependent reaction via a pantoyl-adenylate intermediate. This chain is Pantothenate synthetase, found in Sphingopyxis alaskensis (strain DSM 13593 / LMG 18877 / RB2256) (Sphingomonas alaskensis).